Here is a 491-residue protein sequence, read N- to C-terminus: Synaptotagmin-9 (491 aa).

At 1–52 (MPGARDALCHQALQLLAELCARGALEHDSCQDFIYHLRDRARPRLRDPDISV) the chain is on the vesicular side. Residues 9 to 31 (CHQALQLLAELCARGALEHDSCQ) are cysteine motif. Residues 53 to 73 (SLLTLVVTACGLALFGVSLFV) traverse the membrane as a helical segment. Residues 74–491 (SWKLCWVPWR…AHWHSLMEKR (418 aa)) are Cytoplasmic-facing. Residues 91 to 104 (SKDNNQEPLNYTDT) show a composition bias toward polar residues. Residues 91–147 (SKDNNQEPLNYTDTETNEQENSEDFLDPPTPCPDSSMKISHTSPDIPLSTQPGGQEN) form a disordered region. Residues 105–116 (ETNEQENSEDFL) show a composition bias toward acidic residues. The segment covering 127–144 (MKISHTSPDIPLSTQPGG) has biased composition (polar residues). The residue at position 177 (Ser177) is a Phosphoserine. C2 domains lie at 220–341 (ACGK…ILWK) and 352–485 (DLGE…AHWH). The Ca(2+) site is built by Asp251, Asp257, Asp309, Phe310, Asp311, Ser314, Asp317, Asp383, Asp389, Asp443, and Asp445.

It belongs to the synaptotagmin family. In terms of assembly, homodimer; disulfide-linked via the cysteine motif. Can also form heterodimers with SYT3, SYT6, SYT7 and SYT10. Interacts with DNAJC5 and SNAP25, but not with HSC70. The interaction with DNAJC5 is stimulated tenfold in presence of calcium while the interaction with SNAP25 is inhibited. Requires Ca(2+) as cofactor.

Its subcellular location is the cytoplasmic vesicle. It is found in the secretory vesicle. The protein resides in the synaptic vesicle membrane. May be involved in Ca(2+)-dependent exocytosis of secretory vesicles through Ca(2+) and phospholipid binding to the C2 domain or may serve as Ca(2+) sensors in the process of vesicular trafficking and exocytosis. The polypeptide is Synaptotagmin-9 (Syt9) (Mus musculus (Mouse)).